A 356-amino-acid chain; its full sequence is Phospho-N-acetylmuramoyl-pentapeptide-transferase (356 aa).

Transmembrane regions (helical) follow at residues Thr-25–Ala-45, Gly-70–Trp-90, Leu-93–Phe-113, Phe-138–Leu-158, Tyr-164–Gly-184, Gly-195–Ser-215, Leu-235–Pro-255, Ala-258–Val-278, Ile-284–Val-304, and Gln-333–Leu-353.

It belongs to the glycosyltransferase 4 family. MraY subfamily. Requires Mg(2+) as cofactor.

The protein resides in the cell inner membrane. It carries out the reaction UDP-N-acetyl-alpha-D-muramoyl-L-alanyl-gamma-D-glutamyl-meso-2,6-diaminopimeloyl-D-alanyl-D-alanine + di-trans,octa-cis-undecaprenyl phosphate = di-trans,octa-cis-undecaprenyl diphospho-N-acetyl-alpha-D-muramoyl-L-alanyl-D-glutamyl-meso-2,6-diaminopimeloyl-D-alanyl-D-alanine + UMP. Its pathway is cell wall biogenesis; peptidoglycan biosynthesis. In terms of biological role, catalyzes the initial step of the lipid cycle reactions in the biosynthesis of the cell wall peptidoglycan: transfers peptidoglycan precursor phospho-MurNAc-pentapeptide from UDP-MurNAc-pentapeptide onto the lipid carrier undecaprenyl phosphate, yielding undecaprenyl-pyrophosphoryl-MurNAc-pentapeptide, known as lipid I. This Bartonella quintana (strain Toulouse) (Rochalimaea quintana) protein is Phospho-N-acetylmuramoyl-pentapeptide-transferase.